Reading from the N-terminus, the 261-residue chain is Mlc titration factor A (261 aa).

Zn(2+)-binding residues include His111, His148, His152, and Glu211.

Belongs to the MtfA family. In terms of assembly, interacts with Mlc. Requires Zn(2+) as cofactor.

Its subcellular location is the cytoplasm. Involved in the modulation of the activity of the glucose-phosphotransferase system (glucose-PTS). Interacts with the transcriptional repressor Mlc, preventing its interaction with DNA and leading to the modulation of expression of genes regulated by Mlc, including ptsG, which encodes the PTS system glucose-specific EIICB component. Functionally, shows zinc-dependent metallopeptidase activity. This is Mlc titration factor A from Edwardsiella ictaluri (strain 93-146).